Here is a 1347-residue protein sequence, read N- to C-terminus: Ubinuclein-2 (1347 aa).

The disordered stretch occupies residues 1-134; sequence MAEPRRVAFI…ETVRLELVLK (134 aa). S13 bears the Phosphoserine mark. 2 stretches are compositionally biased toward basic and acidic residues: residues 16–37 and 67–79; these read RRRE…EPPR and SREK…EVSR. Residues 93 to 110 show a composition bias toward pro residues; sequence PEPPPPFPPLPLQPPPPR. The segment covering 122–134 has biased composition (basic and acidic residues); the sequence is PPRETVRLELVLK. At T243 the chain carries Phosphothreonine. At S250 the chain carries Phosphoserine. Residues 250–301 are disordered; sequence SDTEEDDITDNQKHKPPKVPKIKEDDIEMKKRKRKEEGEKEKKPRKKVPKQL. At T252 the chain carries Phosphothreonine. K272 is covalently cross-linked (Glycyl lysine isopeptide (Lys-Gly) (interchain with G-Cter in SUMO2)). Phosphoserine occurs at positions 311, 416, 419, 422, and 584. Disordered stretches follow at residues 573–597, 707–740, 815–849, 880–913, 981–1006, and 1035–1218; these read LQTD…KRVI, ECSP…AAAS, LATP…DLAH, GLQR…HALG, RLPL…TVPS, and ASPK…SSVV. A compositionally biased stretch (basic and acidic residues) spans 574–584; the sequence is QTDEEREKNGS. The segment covering 721-740 has biased composition (low complexity); sequence VASVSGPPTSSSTAAIAAAS. Polar residues predominate over residues 823–832; the sequence is STQTTHSSSL. The segment covering 880-911 has biased composition (low complexity); sequence GLQRSSQIHTSSSSQTHVSSSSQAQIAASSHA. A compositionally biased stretch (polar residues) spans 985–996; the sequence is STPSPGNGSQGS. Low complexity predominate over residues 1035–1045; that stretch reads ASPKLAASPKP. A compositionally biased stretch (pro residues) spans 1046 to 1060; that stretch reads ATSPKPLPSPKPSAS. 2 stretches are compositionally biased toward low complexity: residues 1061–1070 and 1077–1095; these read PKPSLSAKPS and SKSN…SSPN. K1068 is subject to N6-acetyllysine. Polar residues-rich tracts occupy residues 1101 to 1164 and 1174 to 1185; these read GSHS…NSLS and RGSNLNSSGANR. S1123 bears the Phosphoserine mark. K1148 carries the post-translational modification N6-acetyllysine.

The protein belongs to the ubinuclein family. Expressed in several cell lines tested, including primary and transformed cell lines.

This chain is Ubinuclein-2 (UBN2), found in Homo sapiens (Human).